A 548-amino-acid chain; its full sequence is T-complex protein 1 subunit theta (548 aa).

An N-acetylalanine modification is found at alanine 2. ADP contacts are provided by tyrosine 47 and glycine 48. Aspartate 99 provides a ligand contact to Mg(2+). Glycine 100, threonine 101, asparagine 102, phenylalanine 103, methionine 169, serine 170, lysine 171, glycine 412, and aspartate 499 together coordinate ADP. Residues glycine 100, threonine 101, and asparagine 102 each contribute to the ATP site. Residues serine 170, lysine 171, glycine 412, aspartate 499, and lysine 504 each coordinate ATP. Position 505 is a phosphotyrosine (tyrosine 505). The interval 529–548 (PAGGPKPPSGKKDWDEDQND) is disordered.

Component of the chaperonin-containing T-complex (TRiC), a hexadecamer composed of two identical back-to-back stacked rings enclosing a protein folding chamber. Each ring is made up of eight different subunits: TCP1/CCT1, CCT2, CCT3, CCT4, CCT5, CCT6A/CCT6, CCT7, CCT8.

It localises to the cytoplasm. The protein localises to the cytoskeleton. The protein resides in the microtubule organizing center. It is found in the centrosome. Its subcellular location is the cilium basal body. It carries out the reaction ATP + H2O = ADP + phosphate + H(+). In terms of biological role, component of the chaperonin-containing T-complex (TRiC), a molecular chaperone complex that assists the folding of actin, tubulin and other proteins upon ATP hydrolysis. The chain is T-complex protein 1 subunit theta from Gallus gallus (Chicken).